A 288-amino-acid polypeptide reads, in one-letter code: NAD kinase (288 aa).

The Proton acceptor role is filled by Asp-70. NAD(+) contacts are provided by residues 70-71 (DG), 144-145 (ND), Arg-155, Lys-172, Asp-174, 185-190 (TGYSLS), and Gln-245.

Belongs to the NAD kinase family. The cofactor is a divalent metal cation.

The protein localises to the cytoplasm. It carries out the reaction NAD(+) + ATP = ADP + NADP(+) + H(+). Its function is as follows. Involved in the regulation of the intracellular balance of NAD and NADP, and is a key enzyme in the biosynthesis of NADP. Catalyzes specifically the phosphorylation on 2'-hydroxyl of the adenosine moiety of NAD to yield NADP. This is NAD kinase from Geobacter sp. (strain M21).